Here is a 157-residue protein sequence, read N- to C-terminus: Phosphopantetheine adenylyltransferase (157 aa).

Residue threonine 8 coordinates substrate. ATP contacts are provided by residues 8-9 and histidine 16; that span reads TF. Lysine 40, threonine 72, and arginine 86 together coordinate substrate. ATP-binding positions include 87-89, glutamate 97, and 122-128; these read GLR and YSFLSSS.

The protein belongs to the bacterial CoaD family. As to quaternary structure, homohexamer. It depends on Mg(2+) as a cofactor.

It is found in the cytoplasm. The catalysed reaction is (R)-4'-phosphopantetheine + ATP + H(+) = 3'-dephospho-CoA + diphosphate. It functions in the pathway cofactor biosynthesis; coenzyme A biosynthesis; CoA from (R)-pantothenate: step 4/5. Reversibly transfers an adenylyl group from ATP to 4'-phosphopantetheine, yielding dephospho-CoA (dPCoA) and pyrophosphate. In Prochlorococcus marinus (strain MIT 9215), this protein is Phosphopantetheine adenylyltransferase.